The following is a 328-amino-acid chain: uncharacterized protein (328 aa).

The first 24 residues, 1–24 (MKSIKGLGKLLLASSILFSSSAFA), serve as a signal peptide directing secretion.

This sequence belongs to the bacterial solute-binding protein 7 family.

The protein resides in the periplasm. This is an uncharacterized protein from Haemophilus influenzae (strain ATCC 51907 / DSM 11121 / KW20 / Rd).